Here is a 344-residue protein sequence, read N- to C-terminus: Selenide, water dikinase (344 aa).

C15 is a catalytic residue. ATP-binding positions include K18 and 46 to 48 (TKD). D49 lines the Mg(2+) pocket. ATP is bound by residues D66, D89, and 137–139 (GHS). D89 contacts Mg(2+). A Mg(2+)-binding site is contributed by D225.

The protein belongs to the selenophosphate synthase 1 family. Class I subfamily. Homodimer. Mg(2+) serves as cofactor.

It carries out the reaction hydrogenselenide + ATP + H2O = selenophosphate + AMP + phosphate + 2 H(+). In terms of biological role, synthesizes selenophosphate from selenide and ATP. This is Selenide, water dikinase from Colwellia psychrerythraea (strain 34H / ATCC BAA-681) (Vibrio psychroerythus).